We begin with the raw amino-acid sequence, 84 residues long: Small ribosomal subunit protein bS20 (84 aa).

Belongs to the bacterial ribosomal protein bS20 family.

Functionally, binds directly to 16S ribosomal RNA. The chain is Small ribosomal subunit protein bS20 from Lacticaseibacillus casei (strain BL23) (Lactobacillus casei).